A 362-amino-acid polypeptide reads, in one-letter code: Heat-inducible transcription repressor HrcA (362 aa).

The protein belongs to the HrcA family.

Functionally, negative regulator of class I heat shock genes (grpE-dnaK-dnaJ and groELS operons). Prevents heat-shock induction of these operons. The chain is Heat-inducible transcription repressor HrcA from Rhizobium leguminosarum bv. trifolii (strain WSM2304).